Reading from the N-terminus, the 189-residue chain is UPF0301 protein CCA_00630 (189 aa).

Belongs to the UPF0301 (AlgH) family.

The chain is UPF0301 protein CCA_00630 from Chlamydia caviae (strain ATCC VR-813 / DSM 19441 / 03DC25 / GPIC) (Chlamydophila caviae).